A 267-amino-acid chain; its full sequence is Phosphatidylglycerol--prolipoprotein diacylglyceryl transferase (267 aa).

Helical transmembrane passes span 18 to 38, 57 to 77, and 95 to 115; these read LSVR…MWFA, FLFY…VLFY, and GGMS…IFAW. Arg-140 is a binding site for a 1,2-diacyl-sn-glycero-3-phospho-(1'-sn-glycerol). 3 helical membrane passes run 173-193, 200-220, and 233-253; these read SQLY…QWFI, GSVA…IEYF, and FISM…GLLI.

Belongs to the Lgt family.

The protein resides in the cell inner membrane. The enzyme catalyses L-cysteinyl-[prolipoprotein] + a 1,2-diacyl-sn-glycero-3-phospho-(1'-sn-glycerol) = an S-1,2-diacyl-sn-glyceryl-L-cysteinyl-[prolipoprotein] + sn-glycerol 1-phosphate + H(+). Its pathway is protein modification; lipoprotein biosynthesis (diacylglyceryl transfer). In terms of biological role, catalyzes the transfer of the diacylglyceryl group from phosphatidylglycerol to the sulfhydryl group of the N-terminal cysteine of a prolipoprotein, the first step in the formation of mature lipoproteins. The protein is Phosphatidylglycerol--prolipoprotein diacylglyceryl transferase of Pseudoalteromonas translucida (strain TAC 125).